Reading from the N-terminus, the 305-residue chain is MLKQRTIKSIVKTVGIGVHSGRKVELTLRPAAPDTGIVFSRVDLPTPVDIPASALSIGDTRLASVLQKDGVRVSTVEHLMSACAGLGIDNLYVDVTAEEIPIMDGSAATFVFLIQSAGIEEQNAAKKFIKVTKPVEIRDGDKFARLDPYFGFRLKFTIDFRHPAVDKTGQELEVDFANTSYVREIARARTFGFAHEVEMMRELGLARGGSMDNAIVLDEYRILNNDGLRYDDEFVKHKMLDAIGDLYVIGHPLLASYTAYKSGHGLNNALLRELLAHEQAYEIVTFDDPKTAPTGFGFDAQTAFA.

3 residues coordinate Zn(2+): H78, H237, and D241. Catalysis depends on H264, which acts as the Proton donor.

Belongs to the LpxC family. Zn(2+) serves as cofactor.

The enzyme catalyses a UDP-3-O-[(3R)-3-hydroxyacyl]-N-acetyl-alpha-D-glucosamine + H2O = a UDP-3-O-[(3R)-3-hydroxyacyl]-alpha-D-glucosamine + acetate. It functions in the pathway glycolipid biosynthesis; lipid IV(A) biosynthesis; lipid IV(A) from (3R)-3-hydroxytetradecanoyl-[acyl-carrier-protein] and UDP-N-acetyl-alpha-D-glucosamine: step 2/6. Its function is as follows. Catalyzes the hydrolysis of UDP-3-O-myristoyl-N-acetylglucosamine to form UDP-3-O-myristoylglucosamine and acetate, the committed step in lipid A biosynthesis. This Burkholderia pseudomallei (strain 668) protein is UDP-3-O-acyl-N-acetylglucosamine deacetylase.